Consider the following 348-residue polypeptide: D-alanine--D-alanine ligase (348 aa).

The ATP-grasp domain maps to 132-334 (KRVLESADIP…YAELIEELVR (203 aa)). Residue 162–217 (EAVLSYPVFVKPANMGSSVGISKAESEEELRAAILLALTYDSRILIEQGVLAREIE) participates in ATP binding. Residues aspartate 288, glutamate 301, and asparagine 303 each contribute to the Mg(2+) site.

It belongs to the D-alanine--D-alanine ligase family. Mg(2+) is required as a cofactor. Mn(2+) serves as cofactor.

It localises to the cytoplasm. It carries out the reaction 2 D-alanine + ATP = D-alanyl-D-alanine + ADP + phosphate + H(+). The protein operates within cell wall biogenesis; peptidoglycan biosynthesis. In terms of biological role, cell wall formation. The sequence is that of D-alanine--D-alanine ligase from Streptococcus equi subsp. zooepidemicus (strain MGCS10565).